A 551-amino-acid chain; its full sequence is Arginine--tRNA ligase (551 aa).

Positions 125–135 match the 'HIGH' region motif; the sequence is ANPTGPLHIGH.

This sequence belongs to the class-I aminoacyl-tRNA synthetase family. Monomer.

Its subcellular location is the cytoplasm. It catalyses the reaction tRNA(Arg) + L-arginine + ATP = L-arginyl-tRNA(Arg) + AMP + diphosphate. The protein is Arginine--tRNA ligase of Oleidesulfovibrio alaskensis (strain ATCC BAA-1058 / DSM 17464 / G20) (Desulfovibrio alaskensis).